A 215-amino-acid chain; its full sequence is Chymomexicain (215 aa).

Cystine bridges form between C22-C63, C56-C96, and C154-C201. Residue C25 is part of the active site. Residues H160 and N176 contribute to the active site.

This sequence belongs to the peptidase C1 family.

Its function is as follows. Cysteine protease. In Jacaratia mexicana (Wild papaya), this protein is Chymomexicain.